Reading from the N-terminus, the 555-residue chain is Formate--tetrahydrofolate ligase (555 aa).

65–72 (TPAGEGKT) serves as a coordination point for ATP.

It belongs to the formate--tetrahydrofolate ligase family.

The enzyme catalyses (6S)-5,6,7,8-tetrahydrofolate + formate + ATP = (6R)-10-formyltetrahydrofolate + ADP + phosphate. It functions in the pathway one-carbon metabolism; tetrahydrofolate interconversion. The polypeptide is Formate--tetrahydrofolate ligase (Paracoccus denitrificans (strain Pd 1222)).